Consider the following 245-residue polypeptide: 3-deoxy-manno-octulosonate cytidylyltransferase (245 aa).

This sequence belongs to the KdsB family.

It localises to the cytoplasm. The catalysed reaction is 3-deoxy-alpha-D-manno-oct-2-ulosonate + CTP = CMP-3-deoxy-beta-D-manno-octulosonate + diphosphate. Its pathway is nucleotide-sugar biosynthesis; CMP-3-deoxy-D-manno-octulosonate biosynthesis; CMP-3-deoxy-D-manno-octulosonate from 3-deoxy-D-manno-octulosonate and CTP: step 1/1. It functions in the pathway bacterial outer membrane biogenesis; lipopolysaccharide biosynthesis. Functionally, activates KDO (a required 8-carbon sugar) for incorporation into bacterial lipopolysaccharide in Gram-negative bacteria. In Desulfatibacillum aliphaticivorans, this protein is 3-deoxy-manno-octulosonate cytidylyltransferase.